Reading from the N-terminus, the 581-residue chain is Protein SPT2 homolog (581 aa).

Residues 26–35 show a composition bias toward low complexity; sequence YYSTKYSPPK. Disordered regions lie at residues 26-50 and 145-495; these read YYSTKYSPPKKQSKESKQLSSNIQK and QEDK…EYDS. A coiled-coil region spans residues 36 to 76; the sequence is KQSKESKQLSSNIQKFLQKKEAEEAEKKRLERQKLNDLLAK. A compositionally biased stretch (basic and acidic residues) spans 162–181; the sequence is SGTKERVKAAITREREEAKG. Composition is skewed to polar residues over residues 182 to 197 and 204 to 213; these read NTRQKSSTSTLPSSAT and VARSYSTSKT. Composition is skewed to basic and acidic residues over residues 218–236 and 256–312; these read NAEKLEEERKKRQEEEQRR and LAEK…KETP. Positions 276-307 form a coiled coil; sequence ERLLSAREKRELEERQRQQEQRAQRLKMRESE. A compositionally biased stretch (low complexity) spans 352 to 376; that stretch reads SSASSTSLSSSNSHSSASRSSVSSS. Over residues 447 to 461 the composition is skewed to polar residues; the sequence is TRQTPSSDVQRSQGG. The segment covering 486–495 has biased composition (acidic residues); it reads DDDDEDEYDS.

This sequence belongs to the SPT2 family.

This is Protein SPT2 homolog from Drosophila melanogaster (Fruit fly).